A 171-amino-acid chain; its full sequence is Methylated-DNA--protein-cysteine methyltransferase (171 aa).

The Nucleophile; methyl group acceptor role is filled by Cys-139.

The protein belongs to the MGMT family.

The protein localises to the cytoplasm. The catalysed reaction is a 6-O-methyl-2'-deoxyguanosine in DNA + L-cysteinyl-[protein] = S-methyl-L-cysteinyl-[protein] + a 2'-deoxyguanosine in DNA. It carries out the reaction a 4-O-methyl-thymidine in DNA + L-cysteinyl-[protein] = a thymidine in DNA + S-methyl-L-cysteinyl-[protein]. Involved in the cellular defense against the biological effects of O6-methylguanine (O6-MeG) and O4-methylthymine (O4-MeT) in DNA. Repairs the methylated nucleobase in DNA by stoichiometrically transferring the methyl group to a cysteine residue in the enzyme. This is a suicide reaction: the enzyme is irreversibly inactivated. This Shigella flexneri protein is Methylated-DNA--protein-cysteine methyltransferase.